The following is a 619-amino-acid chain: Chaperone protein HscA homolog (619 aa).

This sequence belongs to the heat shock protein 70 family.

In terms of biological role, chaperone involved in the maturation of iron-sulfur cluster-containing proteins. Has a low intrinsic ATPase activity which is markedly stimulated by HscB. This is Chaperone protein HscA homolog from Acinetobacter baumannii (strain ACICU).